The following is a 156-amino-acid chain: Cyanate hydratase (156 aa).

Catalysis depends on residues Arg96, Glu99, and Ser122.

Belongs to the cyanase family.

The enzyme catalyses cyanate + hydrogencarbonate + 3 H(+) = NH4(+) + 2 CO2. Functionally, catalyzes the reaction of cyanate with bicarbonate to produce ammonia and carbon dioxide. This Escherichia coli O7:K1 (strain IAI39 / ExPEC) protein is Cyanate hydratase.